The sequence spans 421 residues: ATP-dependent RNA helicase RhlB (421 aa).

Residues 9 to 37 (QKFSDFALHPKVVEVLEKKGFHNCTPIQA) carry the Q motif motif. Residues 40 to 219 (LPLTLAGRDV…FEQMNNAEYI (180 aa)) form the Helicase ATP-binding domain. Residue 53 to 60 (AQTGTGKT) participates in ATP binding. The DEAD box motif lies at 165–168 (DEAD). The Helicase C-terminal domain maps to 245 to 390 (RLLQTLIEEE…VSKYNPDALM (146 aa)). Residues 392-421 (DLPKPLRLTRPRTGNGPRRTGAPRNRRRSG) are disordered. Over residues 402 to 414 (PRTGNGPRRTGAP) the composition is skewed to low complexity.

This sequence belongs to the DEAD box helicase family. RhlB subfamily. As to quaternary structure, component of the RNA degradosome, which is a multiprotein complex involved in RNA processing and mRNA degradation.

The protein resides in the cytoplasm. It carries out the reaction ATP + H2O = ADP + phosphate + H(+). DEAD-box RNA helicase involved in RNA degradation. Has RNA-dependent ATPase activity and unwinds double-stranded RNA. This chain is ATP-dependent RNA helicase RhlB, found in Shigella boydii serotype 18 (strain CDC 3083-94 / BS512).